The sequence spans 473 residues: Photosystem II CP43 reaction center protein (473 aa).

The propeptide occupies 1-14 (MKTLYSPRRFYPVE). An N-acetylthreonine modification is found at Thr-15. The residue at position 15 (Thr-15) is a Phosphothreonine. Transmembrane regions (helical) follow at residues 69–93 (LFEV…PHLA), 134–155 (LLGP…KDRN), 178–200 (KALY…RKIS), 255–275 (KPFA…LSYS), and 291–312 (WFNN…ASQA). [CaMn4O5] cluster is bound at residue Glu-367. A helical membrane pass occupies residues 447-471 (RARAAAAGFEKGIDRDLEPVLFMTP).

The protein belongs to the PsbB/PsbC family. PsbC subfamily. In terms of assembly, PSII is composed of 1 copy each of membrane proteins PsbA, PsbB, PsbC, PsbD, PsbE, PsbF, PsbH, PsbI, PsbJ, PsbK, PsbL, PsbM, PsbT, PsbX, PsbY, PsbZ, Psb30/Ycf12, at least 3 peripheral proteins of the oxygen-evolving complex and a large number of cofactors. It forms dimeric complexes. The cofactor is Binds multiple chlorophylls and provides some of the ligands for the Ca-4Mn-5O cluster of the oxygen-evolving complex. It may also provide a ligand for a Cl- that is required for oxygen evolution. PSII binds additional chlorophylls, carotenoids and specific lipids..

The protein resides in the plastid. Its subcellular location is the chloroplast thylakoid membrane. One of the components of the core complex of photosystem II (PSII). It binds chlorophyll and helps catalyze the primary light-induced photochemical processes of PSII. PSII is a light-driven water:plastoquinone oxidoreductase, using light energy to abstract electrons from H(2)O, generating O(2) and a proton gradient subsequently used for ATP formation. This Ranunculus macranthus (Large buttercup) protein is Photosystem II CP43 reaction center protein.